A 201-amino-acid chain; its full sequence is 3-isopropylmalate dehydratase small subunit (201 aa).

This sequence belongs to the LeuD family. LeuD type 1 subfamily. In terms of assembly, heterodimer of LeuC and LeuD.

The catalysed reaction is (2R,3S)-3-isopropylmalate = (2S)-2-isopropylmalate. It functions in the pathway amino-acid biosynthesis; L-leucine biosynthesis; L-leucine from 3-methyl-2-oxobutanoate: step 2/4. In terms of biological role, catalyzes the isomerization between 2-isopropylmalate and 3-isopropylmalate, via the formation of 2-isopropylmaleate. This is 3-isopropylmalate dehydratase small subunit from Cytophaga hutchinsonii (strain ATCC 33406 / DSM 1761 / CIP 103989 / NBRC 15051 / NCIMB 9469 / D465).